Here is a 437-residue protein sequence, read N- to C-terminus: AA9 family lytic polysaccharide monooxygenase H (437 aa).

A signal peptide spans 1-21 (MNLSLFTLALVACYSSQLAAA). His22 contacts Cu(2+). Residues Cys64 and Cys193 are joined by a disulfide bond. N-linked (GlcNAc...) asparagine glycans are attached at residues Asn67 and Asn79. His104 contacts Cu(2+). 2 N-linked (GlcNAc...) asparagine glycosylation sites follow: Asn120 and Asn138. O2 is bound by residues His178 and Gln188. Tyr190 is a binding site for Cu(2+). Asn252 and Asn307 each carry an N-linked (GlcNAc...) asparagine glycan. A Chitin-binding type-1 domain is found at 392–437 (DGKCGDGNGQTCKGSLLGECCSQVGYCGSSESYCGVGCQGNFGVCG). 4 disulfide bridges follow: Cys395-Cys412, Cys403-Cys418, Cys411-Cys425, and Cys429-Cys436.

Belongs to the polysaccharide monooxygenase AA9 family. Cu(2+) serves as cofactor.

It localises to the secreted. The catalysed reaction is [(1-&gt;4)-beta-D-glucosyl]n+m + reduced acceptor + O2 = 4-dehydro-beta-D-glucosyl-[(1-&gt;4)-beta-D-glucosyl]n-1 + [(1-&gt;4)-beta-D-glucosyl]m + acceptor + H2O.. In terms of biological role, lytic polysaccharide monooxygenase (LPMO) that depolymerizes crystalline and amorphous polysaccharides via the oxidation of scissile alpha- or beta-(1-4)-glycosidic bonds, yielding C1 and C4 oxidation products. Catalysis by LPMOs requires the reduction of the active-site copper from Cu(II) to Cu(I) by a reducing agent and H(2)O(2) or O(2) as a cosubstrate. In Botryotinia fuckeliana (strain B05.10) (Noble rot fungus), this protein is AA9 family lytic polysaccharide monooxygenase H.